We begin with the raw amino-acid sequence, 1381 residues long: Hepatocyte growth factor receptor (1381 aa).

A signal peptide spans 1-24; that stretch reads MKAPAVLAPGILVLLFTLVQRSNG. Topologically, residues 25–932 are extracellular; sequence ECKEALAKSE…VIVQPDQNFT (908 aa). In terms of domain architecture, Sema spans 27–515; that stretch reads KEALAKSEMN…TGKKITKIPL (489 aa). N-linked (GlcNAc...) asparagine glycosylation occurs at Asn45. Cystine bridges form between Cys95–Cys101, Cys98–Cys160, Cys133–Cys141, and Cys172–Cys175. N-linked (GlcNAc...) asparagine glycosylation is present at Asn106. Asn149 carries N-linked (GlcNAc...) asparagine glycosylation. Residue Asn202 is glycosylated (N-linked (GlcNAc...) asparagine). 2 disulfide bridges follow: Cys298/Cys363 and Cys385/Cys397. Residues Asn399 and Asn405 are each glycosylated (N-linked (GlcNAc...) asparagine). 4 disulfides stabilise this stretch: Cys520–Cys538, Cys526–Cys561, Cys529–Cys545, and Cys541–Cys551. 3 consecutive IPT/TIG domains span residues 563-655, 657-739, and 742-836; these read PAIY…FSYV, PIIT…FSYR, and PIVY…LIYV. Thr582 carries an O-linked (Man) threonine glycan. Asn607 and Asn635 each carry an N-linked (GlcNAc...) asparagine glycan. Thr676 and Thr761 each carry an O-linked (Man) threonine glycan. N-linked (GlcNAc...) asparagine glycans are attached at residues Asn785, Asn879, and Asn930. The chain crosses the membrane as a helical span at residues 933-955; the sequence is GLIAGVVSISIALLLLLGLFLWL. The Cytoplasmic portion of the chain corresponds to 956–1381; sequence KKRKQIKDLG…EDNADDEVDT (426 aa). Ser966 is modified (phosphoserine). Thr977 carries the post-translational modification Phosphothreonine. 3 positions are modified to phosphoserine: Ser990, Ser997, and Ser1000. Tyr1003 carries the post-translational modification Phosphotyrosine. Positions 1078–1345 constitute a Protein kinase domain; sequence VHFNEVIGRG…RISAIFSTFI (268 aa). Residues 1084-1092 and Lys1110 each bind ATP; that span reads IGRGHFGCV. Asp1204 (proton acceptor) is an active-site residue. The interaction with RANBP9 stretch occupies residues 1212-1381; sequence LDEKFTVKVA…EDNADDEVDT (170 aa). Tyr1230 carries the post-translational modification Phosphotyrosine. Phosphotyrosine; by autocatalysis is present on residues Tyr1234 and Tyr1235. Residue Thr1289 is modified to Phosphothreonine. Residues 1320–1359 form an interaction with MUC20 region; it reads WHPKAEMRPSFSELVSRISAIFSTFIGEHYVHVNATYVNV. Phosphotyrosine; by autocatalysis occurs at positions 1349 and 1356. Tyr1365 bears the Phosphotyrosine mark.

It belongs to the protein kinase superfamily. Tyr protein kinase family. In terms of assembly, heterodimer made of an alpha chain (50 kDa) and a beta chain (145 kDa) which are disulfide linked. Binds PLXNB1. Interacts when phosphorylated with downstream effectors including STAT3, PIK3R1, SRC, PCLG1, GRB2 and GAB1. Interacts with SPSB1, SPSB2 and SPSB4. Interacts with INPP5D/SHIP1. When phosphorylated at Tyr-1356, interacts with INPPL1/SHIP2. Interacts with RANBP9 and RANBP10, as well as SPSB1, SPSB2, SPSB3 and SPSB4. SPSB1 binding occurs in the presence and in the absence of HGF, however HGF treatment has a positive effect on this interaction. Interacts with MUC20; prevents interaction with GRB2 and suppresses hepatocyte growth factor-induced cell proliferation. Interacts with GRB10. Interacts with PTPN1 and PTPN2. Interacts with HSP90AA1 and HSP90AB1; the interaction suppresses MET kinase activity. Interacts with tensin TNS3. Interacts (when phosphorylated) with tensin TNS4 (via SH2 domain); the interaction increases MET protein stability by inhibiting MET endocytosis and subsequent lysosomal degradation. Post-translationally, autophosphorylated in response to ligand binding on Tyr-1234 and Tyr-1235 in the kinase domain leading to further phosphorylation of Tyr-1349 and Tyr-1356 in the C-terminal multifunctional docking site. Dephosphorylated by PTPRJ at Tyr-1349 and Tyr-1365. Dephosphorylated by PTPN1 and PTPN2. In terms of processing, ubiquitinated. Ubiquitination by CBL regulates the receptor stability and activity through proteasomal degradation. O-mannosylation of IPT/TIG domains by TMEM260 is required for protein maturation. O-mannosylated residues are composed of single mannose glycans that are not elongated or modified.

The protein localises to the membrane. It carries out the reaction L-tyrosyl-[protein] + ATP = O-phospho-L-tyrosyl-[protein] + ADP + H(+). In its inactive state, the C-terminal tail interacts with the catalytic domain and inhibits the kinase activity. Upon ligand binding, the C-terminal tail is displaced and becomes phosphorylated, thus increasing the kinase activity. In terms of biological role, receptor tyrosine kinase that transduces signals from the extracellular matrix into the cytoplasm by binding to hepatocyte growth factor/HGF ligand. Regulates many physiological processes including proliferation, scattering, morphogenesis and survival. Ligand binding at the cell surface induces autophosphorylation of MET on its intracellular domain that provides docking sites for downstream signaling molecules. Following activation by ligand, interacts with the PI3-kinase subunit PIK3R1, PLCG1, SRC, GRB2, STAT3 or the adapter GAB1. Recruitment of these downstream effectors by MET leads to the activation of several signaling cascades including the RAS-ERK, PI3 kinase-AKT, or PLCgamma-PKC. The RAS-ERK activation is associated with the morphogenetic effects while PI3K/AKT coordinates prosurvival effects. During embryonic development, MET signaling plays a role in gastrulation, development and migration of muscles and neuronal precursors, angiogenesis and kidney formation. In adults, participates in wound healing as well as organ regeneration and tissue remodeling. Also promotes differentiation and proliferation of hematopoietic cells. The sequence is that of Hepatocyte growth factor receptor (MET) from Colobus guereza (Mantled guereza).